A 380-amino-acid polypeptide reads, in one-letter code: Chaperone protein DnaJ (380 aa).

The region spanning 5 to 69 (DFYEVLGVGR…QKKAAYDQYG (65 aa)) is the J domain. Residues 135 to 213 (GCSKEIRVPT…CHGQGRVEKT (79 aa)) form a CR-type zinc finger. Residues Cys-148, Cys-151, Cys-165, Cys-168, Cys-187, Cys-190, Cys-201, and Cys-204 each coordinate Zn(2+). CXXCXGXG motif repeat units follow at residues 148–155 (CDSCDGSG), 165–172 (CGTCHGQG), 187–194 (CPHCHGRG), and 201–208 (CNSCHGQG).

It belongs to the DnaJ family. As to quaternary structure, homodimer. The cofactor is Zn(2+).

The protein localises to the cytoplasm. Participates actively in the response to hyperosmotic and heat shock by preventing the aggregation of stress-denatured proteins and by disaggregating proteins, also in an autonomous, DnaK-independent fashion. Unfolded proteins bind initially to DnaJ; upon interaction with the DnaJ-bound protein, DnaK hydrolyzes its bound ATP, resulting in the formation of a stable complex. GrpE releases ADP from DnaK; ATP binding to DnaK triggers the release of the substrate protein, thus completing the reaction cycle. Several rounds of ATP-dependent interactions between DnaJ, DnaK and GrpE are required for fully efficient folding. Also involved, together with DnaK and GrpE, in the DNA replication of plasmids through activation of initiation proteins. The polypeptide is Chaperone protein DnaJ (Photobacterium profundum (strain SS9)).